The sequence spans 410 residues: L-sorbose 1-phosphate reductase (410 aa).

Residues C40, H69, and E70 each contribute to the Zn(2+) site. Residues R221 and 309–310 contribute to the NAD(+) site; that span reads GT.

This sequence belongs to the zinc-containing alcohol dehydrogenase family. Zn(2+) serves as cofactor.

Its function is as follows. Reduces L-sorbose 1-phosphate to D-glucitol 6-phosphate. This is L-sorbose 1-phosphate reductase (sorE) from Klebsiella pneumoniae.